A 108-amino-acid chain; its full sequence is Protein S100-A15A (108 aa).

The 36-residue stretch at 53 to 88 (KEPYYITELFQAADKNKDNQICFDEFLYILGKLVKD) folds into the EF-hand domain. 5 residues coordinate Ca(2+): D66, N68, D70, Q72, and E77.

Belongs to the S-100 family.

The protein is Protein S100-A15A (S100A15A) of Pongo abelii (Sumatran orangutan).